We begin with the raw amino-acid sequence, 141 residues long: Large ribosomal subunit protein uL11 (141 aa).

Belongs to the universal ribosomal protein uL11 family. Part of the ribosomal stalk of the 50S ribosomal subunit. Interacts with L10 and the large rRNA to form the base of the stalk. L10 forms an elongated spine to which L12 dimers bind in a sequential fashion forming a multimeric L10(L12)X complex. In terms of processing, one or more lysine residues are methylated.

In terms of biological role, forms part of the ribosomal stalk which helps the ribosome interact with GTP-bound translation factors. The sequence is that of Large ribosomal subunit protein uL11 from Pediococcus pentosaceus (strain ATCC 25745 / CCUG 21536 / LMG 10740 / 183-1w).